The sequence spans 350 residues: 4-hydroxy-3-methylbut-2-en-1-yl diphosphate synthase (flavodoxin) (350 aa).

[4Fe-4S] cluster is bound by residues Cys263, Cys266, Cys298, and Glu305.

The protein belongs to the IspG family. [4Fe-4S] cluster is required as a cofactor.

It catalyses the reaction (2E)-4-hydroxy-3-methylbut-2-enyl diphosphate + oxidized [flavodoxin] + H2O + 2 H(+) = 2-C-methyl-D-erythritol 2,4-cyclic diphosphate + reduced [flavodoxin]. It functions in the pathway isoprenoid biosynthesis; isopentenyl diphosphate biosynthesis via DXP pathway; isopentenyl diphosphate from 1-deoxy-D-xylulose 5-phosphate: step 5/6. Functionally, converts 2C-methyl-D-erythritol 2,4-cyclodiphosphate (ME-2,4cPP) into 1-hydroxy-2-methyl-2-(E)-butenyl 4-diphosphate. The protein is 4-hydroxy-3-methylbut-2-en-1-yl diphosphate synthase (flavodoxin) of Nautilia profundicola (strain ATCC BAA-1463 / DSM 18972 / AmH).